The following is a 283-amino-acid chain: Protein boule-like (283 aa).

The tract at residues 1–25 (MQTDSLSPSPNPVSPVPLNNPTSAP) is disordered. Residues 33-110 (NRIFVGGIDF…KKLNIGPAIR (78 aa)) enclose the RRM domain. The 25-residue stretch at 160-184 (PSRSVCSSPVMVAQPIYQQPAYHYQ) folds into the DAZ domain.

Belongs to the RRM DAZ family. Interacts with DAZ1 and DAZL. Testis specific. Not expressed in early embryos, primordial germ cells and spermatogonial cells. First expressed in the cytoplasm of spermatocytes and then persists through meiosis.

The protein resides in the cytoplasm. Probable RNA-binding protein, which may be required during spermatogenesis. May act by binding to the 3'-UTR of mRNAs and regulating their translation. The chain is Protein boule-like (BOLL) from Homo sapiens (Human).